We begin with the raw amino-acid sequence, 368 residues long: H-2 class I histocompatibility antigen, D-P alpha chain (368 aa).

A signal peptide spans 1–21 (MAPRTLLLLLAAALAPTQTRA). The interval 22 to 111 (GPHSLRYFVT…LLGYYNQSKG (90 aa)) is alpha-1. Residues 22-303 (GPHSLRYFVT…RWEPPPSTDS (282 aa)) lie on the Extracellular side of the membrane. A glycan (N-linked (GlcNAc...) asparagine) is linked at Asn-107. An alpha-2 region spans residues 112–203 (GSHTIQGMRG…ELGNATLLCT (92 aa)). Cys-122 and Cys-185 are oxidised to a cystine. 2 N-linked (GlcNAc...) asparagine glycosylation sites follow: Asn-197 and Asn-277. Residues 204–295 (DPPKAHVTHH…GLPEPLTLRW (92 aa)) form an alpha-3 region. An Ig-like C1-type domain is found at 206 to 294 (PKAHVTHHPR…EGLPEPLTLR (89 aa)). A disulfide bond links Cys-224 and Cys-280. A connecting peptide region spans residues 296–303 (EPPPSTDS). A helical transmembrane segment spans residues 304 to 330 (YMVIVAVLVVLGAVFIIGAVVAFVMMM). The Cytoplasmic portion of the chain corresponds to 331–368 (RRNTGGKGGDYTLAPGSQSSEMSLRDCKVMVHDSHSLA). A phosphoserine mark is found at Ser-350 and Ser-353.

The protein belongs to the MHC class I family. As to quaternary structure, heterodimer of an alpha chain and a beta chain (beta-2-microglobulin).

Its subcellular location is the membrane. Involved in the presentation of foreign antigens to the immune system. This chain is H-2 class I histocompatibility antigen, D-P alpha chain (H2-D1), found in Mus musculus (Mouse).